A 276-amino-acid polypeptide reads, in one-letter code: Formamidopyrimidine-DNA glycosylase (276 aa).

The Schiff-base intermediate with DNA role is filled by P2. The active-site Proton donor is the E3. Residue K58 is the Proton donor; for beta-elimination activity of the active site. Residues H94, R112, and R157 each contribute to the DNA site. Residues 242–276 (FVYDRAGLPCRVCGTPIKQIVQGQRSTYFCPTCQR) form an FPG-type zinc finger. The active-site Proton donor; for delta-elimination activity is R266.

Belongs to the FPG family. Monomer. Zn(2+) serves as cofactor.

It carries out the reaction Hydrolysis of DNA containing ring-opened 7-methylguanine residues, releasing 2,6-diamino-4-hydroxy-5-(N-methyl)formamidopyrimidine.. It catalyses the reaction 2'-deoxyribonucleotide-(2'-deoxyribose 5'-phosphate)-2'-deoxyribonucleotide-DNA = a 3'-end 2'-deoxyribonucleotide-(2,3-dehydro-2,3-deoxyribose 5'-phosphate)-DNA + a 5'-end 5'-phospho-2'-deoxyribonucleoside-DNA + H(+). Functionally, involved in base excision repair of DNA damaged by oxidation or by mutagenic agents. Acts as a DNA glycosylase that recognizes and removes damaged bases. Has a preference for oxidized purines, such as 7,8-dihydro-8-oxoguanine (8-oxoG). Has AP (apurinic/apyrimidinic) lyase activity and introduces nicks in the DNA strand. Cleaves the DNA backbone by beta-delta elimination to generate a single-strand break at the site of the removed base with both 3'- and 5'-phosphates. The protein is Formamidopyrimidine-DNA glycosylase of Paraburkholderia xenovorans (strain LB400).